We begin with the raw amino-acid sequence, 214 residues long: Scytalone dehydratase-like protein mdpB (214 aa).

2 residues coordinate substrate: Tyr40 and Tyr60. Catalysis depends on residues His95 and His120.

The protein belongs to the scytalone dehydratase family.

It participates in secondary metabolite biosynthesis. In terms of biological role, scytalone dehydratase-like protein; part of the gene cluster that mediates the biosynthesis of monodictyphenone, a prenyl xanthone derivative. The pathway begins with the synthesis of atrochrysone thioester by the polyketide synthase (PKS) mdpG. The atrochrysone carboxyl ACP thioesterase mdpF then breaks the thioester bond and releases the atrochrysone carboxylic acid from mdpG. The atrochrysone carboxylic acid is then converted to atrochrysone which is further transformed into emodin anthrone. The next step is performed by the anthrone oxygenase mdpH that catalyzes the oxidation of emodinanthrone to emodin. Emodin is further modified to yield monodictyphenone via several steps involving mdpB, mdpC mdpJ, mdpK and mdpL. These enzymes with xptA, xptB and xptC are also proposed to be involved in the synthesis of shamixanthone from emodin. Especially, direct reduction of emodin by the short chain dehydrogenase mdpC followed by dehydration catalyzed by the scytalone dehydratase-like protein mdpB gives loss of oxygen and formation of chrysophanol intermediate in two simple steps. The protein is Scytalone dehydratase-like protein mdpB of Emericella nidulans (strain FGSC A4 / ATCC 38163 / CBS 112.46 / NRRL 194 / M139) (Aspergillus nidulans).